Here is a 361-residue protein sequence, read N- to C-terminus: Phosphoserine aminotransferase (361 aa).

Arginine 43 lines the L-glutamate pocket. Pyridoxal 5'-phosphate-binding positions include alanine 77–serine 78, tryptophan 103, threonine 153, aspartate 173, and glutamine 196. Position 197 is an N6-(pyridoxal phosphate)lysine (lysine 197). Asparagine 238 to threonine 239 provides a ligand contact to pyridoxal 5'-phosphate.

This sequence belongs to the class-V pyridoxal-phosphate-dependent aminotransferase family. SerC subfamily. In terms of assembly, homodimer. Pyridoxal 5'-phosphate serves as cofactor.

The protein resides in the cytoplasm. It carries out the reaction O-phospho-L-serine + 2-oxoglutarate = 3-phosphooxypyruvate + L-glutamate. The catalysed reaction is 4-(phosphooxy)-L-threonine + 2-oxoglutarate = (R)-3-hydroxy-2-oxo-4-phosphooxybutanoate + L-glutamate. The protein operates within amino-acid biosynthesis; L-serine biosynthesis; L-serine from 3-phospho-D-glycerate: step 2/3. Its pathway is cofactor biosynthesis; pyridoxine 5'-phosphate biosynthesis; pyridoxine 5'-phosphate from D-erythrose 4-phosphate: step 3/5. Functionally, catalyzes the reversible conversion of 3-phosphohydroxypyruvate to phosphoserine and of 3-hydroxy-2-oxo-4-phosphonooxybutanoate to phosphohydroxythreonine. In Ectopseudomonas mendocina (strain ymp) (Pseudomonas mendocina), this protein is Phosphoserine aminotransferase.